The following is a 78-amino-acid chain: Antitoxin VapB1 (78 aa).

One can recognise a SpoVT-AbrB domain in the interval 3-44; that stretch reads TKVFQSGNSQAVRIPMDFRFDVDTVEIFRKENGDVVLRPVSK.

The protein belongs to the VapB family. Forms multimers, as well forming as a complex with VapC1.

Functionally, antitoxin component of a type II toxin-antitoxin (TA) system. Upon expression in E.coli neutralizes the effect of toxin VapC1. In vitro inhibits the RNase activity of VapC1. This Haemophilus influenzae (strain R2866) protein is Antitoxin VapB1 (vapB1).